The chain runs to 116 residues: Large ribosomal subunit protein bL20 (116 aa).

Belongs to the bacterial ribosomal protein bL20 family.

Its function is as follows. Binds directly to 23S ribosomal RNA and is necessary for the in vitro assembly process of the 50S ribosomal subunit. It is not involved in the protein synthesizing functions of that subunit. This chain is Large ribosomal subunit protein bL20, found in Bacteroides fragilis (strain ATCC 25285 / DSM 2151 / CCUG 4856 / JCM 11019 / LMG 10263 / NCTC 9343 / Onslow / VPI 2553 / EN-2).